The primary structure comprises 231 residues: 7-cyano-7-deazaguanine synthase (231 aa).

8–18 is a binding site for ATP; the sequence is FSGGQDSTTCL. Residues Cys188, Cys197, Cys200, and Cys203 each coordinate Zn(2+).

It belongs to the QueC family. Zn(2+) is required as a cofactor.

It carries out the reaction 7-carboxy-7-deazaguanine + NH4(+) + ATP = 7-cyano-7-deazaguanine + ADP + phosphate + H2O + H(+). It functions in the pathway purine metabolism; 7-cyano-7-deazaguanine biosynthesis. Functionally, catalyzes the ATP-dependent conversion of 7-carboxy-7-deazaguanine (CDG) to 7-cyano-7-deazaguanine (preQ(0)). The protein is 7-cyano-7-deazaguanine synthase of Salmonella schwarzengrund (strain CVM19633).